The following is a 527-amino-acid chain: Protein IQ-DOMAIN 4 (527 aa).

The segment at 13 to 90 (CLSPGKDKKN…PPSPPPPPPA (78 aa)) is disordered. A compositionally biased stretch (basic and acidic residues) spans 17–26 (GKDKKNQKPE). Residues 63 to 90 (PYPPPPPLPDFAPQPLLPPPSPPPPPPA) show a composition bias toward pro residues. In terms of domain architecture, IQ spans 147–175 (EETAAIKIQNAYRCYTARRTLRALRGMAR). Positions 256 to 273 (RSVNRKEASVRRERALAY) are calmodulin-binding. A disordered region spans residues 323–527 (VSVKSSLKRE…EKKRRNGGSS (205 aa)). Over residues 335 to 360 (IKSSPARSKTQKSASQSSIQWPVNND) the composition is skewed to polar residues. Residues 361 to 370 (TKSRKIEVTN) are compositionally biased toward basic and acidic residues. Polar residues-rich tracts occupy residues 399–422 (LDNTQTVKSKVSVETTSNVSNAQT) and 437–455 (NTKTLKSKSSVGTTGNLAN). Positions 471–481 (PKKEVVADKKK) are enriched in basic and acidic residues. Residues 478 to 485 (DKKKPPQM) carry the Nuclear localization signal motif.

The protein belongs to the IQD family. Binds to multiple calmodulin (CaM) in the presence of Ca(2+) and CaM-like proteins.

It is found in the nucleus. The protein localises to the nucleolus. In terms of biological role, may be involved in cooperative interactions with calmodulins or calmodulin-like proteins. Recruits calmodulin proteins to microtubules, thus being a potential scaffold in cellular signaling and trafficking. May associate with nucleic acids and regulate gene expression at the transcriptional or post-transcriptional level. This is Protein IQ-DOMAIN 4 from Arabidopsis thaliana (Mouse-ear cress).